We begin with the raw amino-acid sequence, 10061 residues long: MATH and LRR domain-containing protein PFE0570w (10061 aa).

3 disordered regions span residues D166–N210, N244–N471, and D1004–F1170. Positions N169 to G179 are enriched in polar residues. Over residues T193–I205 the composition is skewed to low complexity. Positions K270–D282 are enriched in basic and acidic residues. The segment covering N285 to N320 has biased composition (low complexity). A compositionally biased stretch (polar residues) spans D328–Q338. Residues Q338–N366 adopt a coiled-coil conformation. A compositionally biased stretch (basic and acidic residues) spans Q342–T365. Over residues N366–T375 the composition is skewed to acidic residues. Composition is skewed to polar residues over residues D376–E389 and V421–N437. Residues N431 to D469 adopt a coiled-coil conformation. Over residues E441–K451 the composition is skewed to basic residues. The span at N460 to N471 shows a compositional bias: low complexity. The segment covering N1025–I1037 has biased composition (basic and acidic residues). Over residues N1047–N1057 the composition is skewed to low complexity. Over residues D1058–N1132 the composition is skewed to basic and acidic residues. Acidic residues predominate over residues E1133–D1165. One can recognise an MATH domain in the interval N1328–V1458. Positions G1651 to N1698 are disordered. A compositionally biased stretch (basic and acidic residues) spans Q1658–K1680. The stretch at N1916 to E1948 forms a coiled coil. The span at H1973–D1995 shows a compositional bias: basic and acidic residues. Disordered stretches follow at residues H1973–N1998, L2155–K2245, Y2427–K2566, and S3120–K3139. Over residues N2216 to Y2228 the composition is skewed to acidic residues. Residues S2235–K2245 show a composition bias toward basic and acidic residues. Positions N2475–M2484 are enriched in low complexity. Composition is skewed to basic and acidic residues over residues D2487–E2496 and Q2505–D2527. 2 stretches are compositionally biased toward low complexity: residues N2552–N2564 and N3121–N3133. The stretch at N2555 to N2580 forms a coiled coil. The chain crosses the membrane as a helical span at residues K3398–I3418. Disordered stretches follow at residues S3802–K3826, L3847–N3890, and E3919–S3953. Residues V3809–K3822 show a composition bias toward basic and acidic residues. Over residues N3851–N3890 the composition is skewed to low complexity. Polar residues predominate over residues K3926–R3941. The segment covering N3942–S3953 has biased composition (basic and acidic residues). The stretch at E3977–L4001 forms a coiled coil. Residues V4039–N4065 show a composition bias toward basic and acidic residues. Disordered stretches follow at residues V4039 to N4074, K4155 to G4180, S4352 to N4414, N4919 to N4943, D4991 to K5030, and S5179 to L5207. Low complexity predominate over residues N4157–N4178. A coiled-coil region spans residues N4399–S4424. Composition is skewed to low complexity over residues N4929 to N4943, N5004 to N5019, and N5185 to N5202. Positions N5006–D5046 form a coiled coil. Coiled-coil stretches lie at residues N5486–E5563, D5728–E5810, and M5900–Y6022. Basic and acidic residues-rich tracts occupy residues K5716–D5732, S5738–P5811, and N5909–N5953. Disordered regions lie at residues K5716–E5816, E5892–K6009, K6123–K6142, N6299–E6338, N6722–I6760, E7585–K7730, and D7744–S7787. Residues N5954–N5968 show a composition bias toward low complexity. Residues G5969–S5978 are compositionally biased toward acidic residues. Residues N5991 to K6003 show a composition bias toward basic and acidic residues. Residues S6129–N6138 show a composition bias toward polar residues. 2 stretches are compositionally biased toward low complexity: residues S6314–N6333 and N6722–N6759. The stretch at N6719 to N6743 forms a coiled coil. Residues E7585–G7599 show a composition bias toward basic and acidic residues. The span at D7600–D7685 shows a compositional bias: acidic residues. Coiled-coil stretches lie at residues E7601–D7637, N7710–E7813, K7934–E7961, and N8217–E8241. Positions S7749–N7765 are enriched in basic residues. Basic and acidic residues predominate over residues K7766–S7786. 3 disordered regions span residues E8189 to E8252, G8293 to S8380, and K8474 to E8497. Basic and acidic residues predominate over residues I8218–G8242. Residues E8243–E8252 are compositionally biased toward acidic residues. The segment covering L8305–D8314 has biased composition (basic and acidic residues). Residues N8315–D8363 are compositionally biased toward acidic residues. Residues E8364 to R8374 are compositionally biased toward basic and acidic residues. Residues Y8478–V8492 are compositionally biased toward low complexity. Coiled-coil stretches lie at residues S8644–N8697, Q8882–Y8907, and I9219–N9247. 3 disordered regions span residues T9759–S9779, S9891–N9926, and K9985–Y10061. Low complexity-rich tracts occupy residues N9764–S9779, N9899–N9926, and N9986–T10022. The segment covering I10031–T10041 has biased composition (polar residues). The segment covering N10042–Y10061 has biased composition (low complexity).

It localises to the membrane. This is MATH and LRR domain-containing protein PFE0570w from Plasmodium falciparum (isolate 3D7).